We begin with the raw amino-acid sequence, 555 residues long: Heterochromatin protein 1-binding protein 3 (555 aa).

Position 2 is an N-acetylalanine (alanine 2). Serine 6 carries the post-translational modification Phosphoserine. The interval 29 to 134 (KLGEKVEDNT…KEKKVKKTIP (106 aa)) is disordered. Phosphothreonine is present on threonine 51. The span at 51 to 67 (TPPKSKLAEGVEEKPEP) shows a compositional bias: basic and acidic residues. Lysine 64 participates in a covalent cross-link: Glycyl lysine isopeptide (Lys-Gly) (interchain with G-Cter in SUMO2). A Phosphothreonine modification is found at threonine 85. A Glycyl lysine isopeptide (Lys-Gly) (interchain with G-Cter in SUMO2) cross-link involves residue lysine 97. Residues 100–127 (PENEEKEENKPSEETKKDEKDQSKEKEK) show a composition bias toward basic and acidic residues. Serine 142, serine 155, and serine 156 each carry phosphoserine. The 76-residue stretch at 157 to 232 (PRPKMDAILT…GASGSFVVVQ (76 aa)) folds into the H15 1 domain. The residue at position 190 (lysine 190) is an N6-acetyllysine. The disordered stretch occupies residues 227-254 (SFVVVQKSRKPPQKSRNRKNRSSAVDPE). The span at 233–247 (KSRKPPQKSRNRKNR) shows a compositional bias: basic residues. 2 positions are modified to phosphoserine: serine 248 and serine 249. 2 H15 domains span residues 255 to 330 (PQVK…QLKK) and 337 to 413 (LGGS…QLCF). Residue lysine 258 forms a Glycyl lysine isopeptide (Lys-Gly) (interchain with G-Cter in SUMO2) linkage. Residues 422-555 (LFPKKEPDDS…TMKKSFKAKK (134 aa)) form a disordered region. Residues 430–452 (DSKDEDEDEDEDDSSEEDSEDEE) are compositionally biased toward acidic residues. Serine 443, serine 444, and serine 448 each carry phosphoserine. Basic residues predominate over residues 491–512 (GKTRPLPKKAPPKAKSPAKKAR). Over residues 513–532 (PSPSVIKKPSGSSSKKPAAS) the composition is skewed to low complexity. Basic residues predominate over residues 545 to 555 (STMKKSFKAKK).

As to quaternary structure, interacts (via PxVxL motif) with CBX5.

It localises to the nucleus. The protein resides in the chromosome. Functionally, component of heterochromatin that maintains heterochromatin integrity during G1/S progression and regulates the duration of G1 phase to critically influence cell proliferative capacity. May play a role in hypoxia-induced oncogenesis. This Bos taurus (Bovine) protein is Heterochromatin protein 1-binding protein 3 (HP1BP3).